A 357-amino-acid chain; its full sequence is Non-structural protein NS2 (357 aa).

2 disordered regions span residues 163–199 and 228–267; these read NERE…AREM and LDEK…PKTH. Composition is skewed to acidic residues over residues 230–241 and 250–260; these read EKDEEDGDERED and DDDEQGEDASD.

It belongs to the orbivirus non-structural protein NS2 family.

Single-stranded RNA-binding protein. The polypeptide is Non-structural protein NS2 (Segment-8) (Antilocapra americana (Pronghorn)).